A 1574-amino-acid chain; its full sequence is Synaptojanin-1 (1574 aa).

In terms of domain architecture, SAC spans 119–442 (VRKVLNSGNF…GDSISKIYAG (324 aa)). The catalytic stretch occupies residues 500-899 (GSLRVSEQTL…GPPDGTVLVS (400 aa)). Ser820 and Ser830 each carry phosphoserine. In terms of domain architecture, RRM spans 894 to 971 (GTVLVSIKSS…RTITITLKSP (78 aa)). The span at 1029 to 1054 (HLQPSSSSGLGTSPSSSPRTSPCQSP) shows a compositional bias: low complexity. The tract at residues 1029–1327 (HLQPSSSSGL…GVKQEPTLKS (299 aa)) is disordered. At Ser1053 the chain carries Phosphoserine. Over residues 1090–1100 (PAAQKESSQTI) the composition is skewed to polar residues. Over residues 1105–1127 (PPPPRPVAPPARPAPPQRPPPPS) the composition is skewed to pro residues. Phosphoserine is present on residues Ser1147 and Ser1175. Arg1198 is modified (omega-N-methylarginine). Residue Thr1217 is modified to Phosphothreonine. The segment covering 1287–1310 (SRSSQSLPSDSSPQLQQEQPTGQQ) has biased composition (low complexity). A phosphoserine mark is found at Ser1289 and Ser1350. A Phosphothreonine modification is found at Thr1354. 2 disordered regions span residues 1382–1519 (TMPP…SFDD) and 1532–1574 (LPAR…FTER). Polar residues predominate over residues 1389–1413 (QSKSQESVGSSANPFPSLPTRNPFT). A run of 3 repeats spans residues 1401 to 1403 (NPF), 1410 to 1412 (NPF), and 1421 to 1423 (NPF). A 3 X 3 AA repeats of N-P-F region spans residues 1401–1423 (NPFPSLPTRNPFTDRTAAPGNPF). 2 stretches are compositionally biased toward polar residues: residues 1424-1436 (RVQS…TSWL) and 1472-1484 (DLQS…TSNP). The span at 1535 to 1548 (RRPPPPPPPVPLLP) shows a compositional bias: pro residues. A compositionally biased stretch (low complexity) spans 1549–1563 (PGTTSSAGPSTTLSS). The residue at position 1566 (Ser1566) is a Phosphoserine.

It belongs to the synaptojanin family. In the central section; belongs to the inositol 1,4,5-trisphosphate 5-phosphatase family. Interacts with ASH/GRB2. Interacts with PACSIN1, PACSIN2 and PACSIN3. Interacts with AMPH, SH3GL1, SH3GL2 and SH3GL3. Interacts with MYO1E (via SH3 domain). Interacts with BIN1 and DNM1. Interacts with EPS15. Found in neonatal brain, and in a wide variety of adult non-neuronal tissues. Concentrated at clathrin-coated endocytic intermediates in nerve terminals. Also detected in the lung and heart. Expressed at higher levels than isoform 2 in the testis and liver and is not detected in the skeletal muscle. As to expression, expressed predominantly in the neurons, but is also found in all other tissues at much lower levels. Also detected in the lung and heart. Epressed at lower levels than isoform 1 in the testis and liver and is not detected in the skeletal muscle. In terms of tissue distribution, expressed in the brain.

The protein localises to the membrane. It localises to the cytoplasm. It is found in the perinuclear region. It carries out the reaction a 1,2-diacyl-sn-glycero-3-phospho-(1D-myo-inositol-4,5-bisphosphate) + H2O = a 1,2-diacyl-sn-glycero-3-phospho-(1D-myo-inositol 4-phosphate) + phosphate. Its function is as follows. Phosphatase that acts on various phosphoinositides, including phosphatidylinositol 4-phosphate, phosphatidylinositol (4,5)-bisphosphate and phosphatidylinositol (3,4,5)-trisphosphate. Has a role in clathrin-mediated endocytosis. Hydrolyzes PIP2 bound to actin regulatory proteins resulting in the rearrangement of actin filaments downstream of tyrosine kinase and ASH/GRB2. In Rattus norvegicus (Rat), this protein is Synaptojanin-1 (Synj1).